The following is a 232-amino-acid chain: Protein Mis18-alpha (232 aa).

A phosphoserine mark is found at Ser36, Ser39, and Ser40. One can recognise a Mis18 domain in the interval 79–177; it reads PLVFLCSGCR…SVEAIESYVL (99 aa). Positions 84, 87, 140, and 143 each coordinate Zn(2+). Lys161 is covalently cross-linked (Glycyl lysine isopeptide (Lys-Gly) (interchain with G-Cter in SUMO2)). The residue at position 232 (Ser232) is a Phosphoserine.

Belongs to the mis18 family. In terms of assembly, homodimer, and heterodimer with OIP5/MIS18B. Identified in a complex containing MIS18A, OIP5/MIS18B, MIS18BP1, RBBP7 and RBBP4.

The protein localises to the nucleus. The protein resides in the chromosome. It localises to the centromere. Required for recruitment of CENPA to centromeres and normal chromosome segregation during mitosis. This chain is Protein Mis18-alpha (MIS18A), found in Pan troglodytes (Chimpanzee).